A 131-amino-acid chain; its full sequence is Large ribosomal subunit protein bL17 (131 aa).

This sequence belongs to the bacterial ribosomal protein bL17 family. As to quaternary structure, part of the 50S ribosomal subunit. Contacts protein L32.

This Shewanella violacea (strain JCM 10179 / CIP 106290 / LMG 19151 / DSS12) protein is Large ribosomal subunit protein bL17.